A 471-amino-acid polypeptide reads, in one-letter code: Proline--tRNA ligase (471 aa).

This sequence belongs to the class-II aminoacyl-tRNA synthetase family. ProS type 3 subfamily. Homodimer.

It is found in the cytoplasm. It catalyses the reaction tRNA(Pro) + L-proline + ATP = L-prolyl-tRNA(Pro) + AMP + diphosphate. Functionally, catalyzes the attachment of proline to tRNA(Pro) in a two-step reaction: proline is first activated by ATP to form Pro-AMP and then transferred to the acceptor end of tRNA(Pro). This is Proline--tRNA ligase from Archaeoglobus fulgidus (strain ATCC 49558 / DSM 4304 / JCM 9628 / NBRC 100126 / VC-16).